Here is a 608-residue protein sequence, read N- to C-terminus: Membrane protein insertase YidC (608 aa).

The chain crosses the membrane as a helical span at residues 8–28 (LLLATALSFLVILGWYFFFPP). The interval 33-61 (PQPATEVTETAPQGDTTAPAAAPSAGAAT) is disordered. The next 5 membrane-spanning stretches (helical) occupy residues 378–398 (MGVA…PLAY), 448–468 (LPIL…FVTL), 482–502 (LSVP…WAAP), 506–526 (SLLS…SMWV), and 542–562 (IFAW…SGLV).

The protein belongs to the OXA1/ALB3/YidC family. Type 1 subfamily. Interacts with the Sec translocase complex via SecD. Specifically interacts with transmembrane segments of nascent integral membrane proteins during membrane integration.

It is found in the cell inner membrane. Required for the insertion and/or proper folding and/or complex formation of integral membrane proteins into the membrane. Involved in integration of membrane proteins that insert both dependently and independently of the Sec translocase complex, as well as at least some lipoproteins. Aids folding of multispanning membrane proteins. The polypeptide is Membrane protein insertase YidC (Ruegeria sp. (strain TM1040) (Silicibacter sp.)).